A 99-amino-acid chain; its full sequence is Large ribosomal subunit protein bL21 (99 aa).

This sequence belongs to the bacterial ribosomal protein bL21 family. In terms of assembly, part of the 50S ribosomal subunit. Contacts protein L20.

This protein binds to 23S rRNA in the presence of protein L20. This chain is Large ribosomal subunit protein bL21, found in Mycoplasmopsis agalactiae (strain NCTC 10123 / CIP 59.7 / PG2) (Mycoplasma agalactiae).